The sequence spans 458 residues: Protein adenylyltransferase FICD (458 aa).

At 1–23 (MILMPMASVVAVAEPKWVSVWGR) the chain is on the cytoplasmic side. A helical; Signal-anchor for type II membrane protein membrane pass occupies residues 24-44 (FLWMTLLSMALGSLLALLLPL). The Lumenal segment spans residues 45-458 (GAVEEQCLAV…GFKETLPVRP (414 aa)). Residue serine 79 is modified to O-AMP-serine; by autocatalysis. Residue threonine 80 is modified to O-AMP-threonine; by autocatalysis. TPR repeat units follow at residues 106–139 (AKAA…DPGF) and 140–173 (VDAL…SPFH). Residue threonine 183 is modified to O-AMP-threonine; by autocatalysis. The Inhibitory (S/T)XXXE(G/N) motif signature appears at 230–235 (TVAIEG). Glutamate 234 is a binding site for ATP. Residue asparagine 275 is glycosylated (N-linked (GlcNAc...) asparagine). The Fido domain occupies 285–420 (VTIDHMLEIH…VRPFIRFIAK (136 aa)). Residue 316–319 (VGHH) participates in ATP binding. Histidine 363 is a catalytic residue. Residues 367-374 (DGNGRTSR), 399-400 (YY), and asparagine 407 contribute to the ATP site.

The protein belongs to the fic family. In terms of assembly, homodimer. Interacts with HD. It depends on Mg(2+) as a cofactor. Mn(2+) is required as a cofactor. Auto-AMPylated in vitro.

The protein localises to the endoplasmic reticulum membrane. It carries out the reaction L-tyrosyl-[protein] + ATP = O-(5'-adenylyl)-L-tyrosyl-[protein] + diphosphate. It catalyses the reaction 3-O-(5'-adenylyl)-L-threonyl-[protein] + H2O = L-threonyl-[protein] + AMP + H(+). The enzyme catalyses L-threonyl-[protein] + ATP = 3-O-(5'-adenylyl)-L-threonyl-[protein] + diphosphate. With respect to regulation, the side chain of Glu-234 determines which of the two opposing activities (AMPylase or de-AMPylase) will take place. In response to endoplasmic reticulum stress, mediates de-AMPylase activity. Adenylyltransferase activity is inhibited by the inhibitory helix present at the N-terminus: Glu-234 binds ATP and competes with ATP-binding at Arg-374, thereby preventing adenylyltransferase activity. In unstressed cells, disengagement of Glu-234 promotes adenylyltransferase activity. Activation dissociates ATP-binding from Glu-234, allowing ordered binding of the entire ATP moiety with the alpha-phosphate in an orientation that is productive for accepting an incoming target hydroxyl side chain. Its function is as follows. Protein that can both mediate the addition of adenosine 5'-monophosphate (AMP) to specific residues of target proteins (AMPylation), and the removal of the same modification from target proteins (de-AMPylation), depending on the context. The side chain of Glu-231 determines which of the two opposing activities (AMPylase or de-AMPylase) will take place. Acts as a key regulator of the ERN1/IRE1-mediated unfolded protein response (UPR) by mediating AMPylation or de-AMPylation of HSPA5/BiP. In unstressed cells, acts as an adenylyltransferase by mediating AMPylation of HSPA5/BiP at 'Thr-518', thereby inactivating it. In response to endoplasmic reticulum stress, acts as a phosphodiesterase by mediating removal of ATP (de-AMPylation) from HSPA5/BiP at 'Thr-518', leading to restore HSPA5/BiP activity. Although it is able to AMPylate RhoA, Rac and Cdc42 Rho GTPases in vitro, Rho GTPases do not constitute physiological substrates. This chain is Protein adenylyltransferase FICD, found in Rattus norvegicus (Rat).